We begin with the raw amino-acid sequence, 232 residues long: Polycomb group RING finger protein 5-B (232 aa).

An RING-type zinc finger spans residues 18-57 (CFVCKGYLIKPTTVTECLHTFCKSCIVQHFEDSNDCPKCG). Residues 93–104 (QEDEFWRRKESN) show a composition bias toward basic and acidic residues. The segment at 93 to 128 (QEDEFWRRKESNDENGPMCKKRRVDEEDDDKGDGDY) is disordered.

In terms of assembly, component of a PRC1-like complex.

It is found in the nucleus. Its function is as follows. Component of Polycomb group (PcG) multiprotein complexes; the complex class is required to maintain the transcriptionally repressive state of some genes. The sequence is that of Polycomb group RING finger protein 5-B (pcgf5b) from Danio rerio (Zebrafish).